A 241-amino-acid polypeptide reads, in one-letter code: tRNA (guanine-N(7)-)-methyltransferase B (241 aa).

S-adenosyl-L-methionine is bound by residues G61, E84, R86, N117, A118, and L137. D140 is an active-site residue. The interval 141 to 149 is alphaC helix; sequence PHFKKTKHK. S-adenosyl-L-methionine is bound by residues T215 and E217. The tract at residues 215-223 is alpha6 helix; sequence TEEGKKVQR.

It belongs to the class I-like SAM-binding methyltransferase superfamily. TrmB family. In terms of assembly, catalytic component of the METTL1-WDR4 complex, composed of mettl1 and wdr4.

It is found in the nucleus. It catalyses the reaction guanosine(46) in tRNA + S-adenosyl-L-methionine = N(7)-methylguanosine(46) in tRNA + S-adenosyl-L-homocysteine. The catalysed reaction is a guanosine in mRNA + S-adenosyl-L-methionine = an N(7)-methylguanosine in mRNA + S-adenosyl-L-homocysteine. It carries out the reaction a guanosine in miRNA + S-adenosyl-L-methionine = an N(7)-methylguanosine in miRNA + S-adenosyl-L-homocysteine. It participates in tRNA modification; N(7)-methylguanine-tRNA biosynthesis. Catalytic component of METTL1-WDR4 methyltransferase complex that mediates the formation of N(7)-methylguanine in a subset of RNA species, such as tRNAs, mRNAs and microRNAs (miRNAs). Catalyzes the formation of N(7)-methylguanine at position 46 (m7G46) in a large subset of tRNAs that contain the 5'-RAGGU-3' motif within the variable loop. M7G46 interacts with C13-G22 in the D-loop to stabilize tRNA tertiary structure and protect tRNAs from decay. Also acts as a methyltransferase for a subset of internal N(7)-methylguanine in mRNAs. Internal N(7)-methylguanine methylation of mRNAs in response to stress promotes their relocalization to stress granules, thereby suppressing their translation. Also methylates a specific subset of miRNAs. This chain is tRNA (guanine-N(7)-)-methyltransferase B (mettl1-B), found in Xenopus tropicalis (Western clawed frog).